The chain runs to 324 residues: Lipid droplet-associated hydrolase (324 aa).

The Nucleophile role is filled by Ser136. Active-site charge relay system residues include Asp270 and His299.

The protein belongs to the AB hydrolase superfamily. LDAH family.

The protein localises to the lipid droplet. It localises to the endoplasmic reticulum. The catalysed reaction is a cholesterol ester + H2O = cholesterol + a fatty acid + H(+). Functionally, probable serine lipid hydrolase associated with lipid droplets. Has low cholesterol esterase activity. Appears to lack triglyceride lipase activity. Involved in cholesterol and triglyceride homeostasis; stimulates cellular triglyceride accumulation and cellular cholesterol release. In Gallus gallus (Chicken), this protein is Lipid droplet-associated hydrolase.